The chain runs to 558 residues: Dihydroxy-acid dehydratase (558 aa).

Asp81 serves as a coordination point for Mg(2+). Cys122 serves as a coordination point for [2Fe-2S] cluster. 2 residues coordinate Mg(2+): Asp123 and Lys124. Lys124 carries the N6-carboxylysine modification. Residue Cys195 participates in [2Fe-2S] cluster binding. Glu447 lines the Mg(2+) pocket. Ser473 functions as the Proton acceptor in the catalytic mechanism.

The protein belongs to the IlvD/Edd family. Homodimer. The cofactor is [2Fe-2S] cluster. Requires Mg(2+) as cofactor.

It catalyses the reaction (2R)-2,3-dihydroxy-3-methylbutanoate = 3-methyl-2-oxobutanoate + H2O. The catalysed reaction is (2R,3R)-2,3-dihydroxy-3-methylpentanoate = (S)-3-methyl-2-oxopentanoate + H2O. The protein operates within amino-acid biosynthesis; L-isoleucine biosynthesis; L-isoleucine from 2-oxobutanoate: step 3/4. It participates in amino-acid biosynthesis; L-valine biosynthesis; L-valine from pyruvate: step 3/4. In terms of biological role, functions in the biosynthesis of branched-chain amino acids. Catalyzes the dehydration of (2R,3R)-2,3-dihydroxy-3-methylpentanoate (2,3-dihydroxy-3-methylvalerate) into 2-oxo-3-methylpentanoate (2-oxo-3-methylvalerate) and of (2R)-2,3-dihydroxy-3-methylbutanoate (2,3-dihydroxyisovalerate) into 2-oxo-3-methylbutanoate (2-oxoisovalerate), the penultimate precursor to L-isoleucine and L-valine, respectively. This chain is Dihydroxy-acid dehydratase, found in Bacillus velezensis (strain DSM 23117 / BGSC 10A6 / LMG 26770 / FZB42) (Bacillus amyloliquefaciens subsp. plantarum).